We begin with the raw amino-acid sequence, 144 residues long: Ribosome-binding factor A (144 aa).

A disordered region spans residues 120–144; sequence DKRRMAEAGREEDEAAPDDTTEDKA. Residues 129–144 are compositionally biased toward acidic residues; it reads REEDEAAPDDTTEDKA.

The protein belongs to the RbfA family. In terms of assembly, monomer. Binds 30S ribosomal subunits, but not 50S ribosomal subunits or 70S ribosomes.

Its subcellular location is the cytoplasm. Functionally, one of several proteins that assist in the late maturation steps of the functional core of the 30S ribosomal subunit. Associates with free 30S ribosomal subunits (but not with 30S subunits that are part of 70S ribosomes or polysomes). Required for efficient processing of 16S rRNA. May interact with the 5'-terminal helix region of 16S rRNA. This Aeromonas salmonicida (strain A449) protein is Ribosome-binding factor A.